The following is a 753-amino-acid chain: Centromere protein I (753 aa).

The span at 1 to 15 shows a compositional bias: basic residues; sequence MQRRQSSKHSKRPLQ. The segment at 1-54 is disordered; sequence MQRRQSSKHSKRPLQVHHSNQTDLSAWRKGGTVDTEKSAQNRQSLSDQKNDNEQ.

It belongs to the CENP-I/CTF3 family. In terms of assembly, component of the CENPA-HI complex, at least composed of CENPH, CENPI, CENPK, CENPL, CENPM, CENPO and CENPP.

It is found in the nucleus. The protein localises to the chromosome. Its subcellular location is the centromere. In terms of biological role, component of the CENPA-HI complex, a centromeric complex involved in assembly of kinetochore proteins, mitotic progression and chromosome segregation. Required for the localization of CENPC but not CENPA to the centromere. It however may be involved in incorporation of newly synthesized CENPA into centromeres via its interaction with the CENPA-NAC complex. In Gallus gallus (Chicken), this protein is Centromere protein I (CENPI).